The primary structure comprises 248 residues: 3-deoxy-manno-octulosonate cytidylyltransferase (248 aa).

This sequence belongs to the KdsB family.

It is found in the cytoplasm. The enzyme catalyses 3-deoxy-alpha-D-manno-oct-2-ulosonate + CTP = CMP-3-deoxy-beta-D-manno-octulosonate + diphosphate. Its pathway is nucleotide-sugar biosynthesis; CMP-3-deoxy-D-manno-octulosonate biosynthesis; CMP-3-deoxy-D-manno-octulosonate from 3-deoxy-D-manno-octulosonate and CTP: step 1/1. It participates in bacterial outer membrane biogenesis; lipopolysaccharide biosynthesis. Functionally, activates KDO (a required 8-carbon sugar) for incorporation into bacterial lipopolysaccharide in Gram-negative bacteria. This Christiangramia forsetii (strain DSM 17595 / CGMCC 1.15422 / KT0803) (Gramella forsetii) protein is 3-deoxy-manno-octulosonate cytidylyltransferase.